The primary structure comprises 238 residues: MKIQCDVCEKAPATLICCADEAALCAKCDVEVHAANKLASKHQRLFLDSLSTKFPPCDICLEKAAFIFCVEDRALLCRDCDEATHAPNTRSANHQRFLATGIRVALSSTSCNQEVEKNHFDPSNQQSLSKPPTQQPAAPSPLWATDEFFSYSDLDCSNKEKEQLDLGELDWLAEMGLFGDQPDQEALPVAEVPELSFSHLAHAHSYNRPMKSNVPNKKQRLEYRYDDEEEHFLVPDLG.

Positions 5, 8, 28, 33, 57, 60, 80, and 85 each coordinate Zn(2+). The B box-type 1; atypical zinc finger occupies 5-47 (CDVCEKAPATLICCADEAALCAKCDVEVHAANKLASKHQRLFL). Residues 57 to 99 (CDICLEKAAFIFCVEDRALLCRDCDEATHAPNTRSANHQRFLA) form a B box-type 2; atypical zinc finger. Positions 115–139 (VEKNHFDPSNQQSLSKPPTQQPAAP) are disordered. Over residues 121–137 (DPSNQQSLSKPPTQQPA) the composition is skewed to polar residues. The segment at 226 to 238 (DDEEEHFLVPDLG) is interaction with COP1.

In terms of assembly, interacts with COP1 WD40 domain. Interacts with HY5 and HYH. COP1-mediated ubiquitination and subsequent proteasomal degradation of BBX25/STH occurs in the dark.

It localises to the nucleus. Acts as a negative regulator of seedling photomorphogenesis. BBX25/STH and BBX24/STO function as transcriptional corepressors of HY5 activity, leading to the down-regulation of BBX22 expression. BBX25/STH acts additively with BBX24/STO during de-etiolation and the hypocotyl shade avoidance response. In Arabidopsis thaliana (Mouse-ear cress), this protein is B-box zinc finger protein 25.